The sequence spans 80 residues: SPbeta prophage-derived thioredoxin-like protein YosR (80 aa).

The Thioredoxin domain occupies 1–80 (MRLIKLEQPN…ELDELLKELR (80 aa)). The cysteines at positions 11 and 14 are disulfide-linked.

Belongs to the thioredoxin family.

The chain is SPbeta prophage-derived thioredoxin-like protein YosR (yosR) from Bacillus subtilis (strain 168).